The primary structure comprises 394 residues: Nuclear hormone receptor family member nhr-103 (394 aa).

The nuclear receptor DNA-binding region spans serine 8–threonine 83. The NR C4-type zinc-finger motif lies at cysteine 11–cysteine 31. The NR C4-type; degenerate zinc-finger motif lies at glutamine 47–cysteine 66. Residues tyrosine 126–threonine 394 form the NR LBD domain.

Belongs to the nuclear hormone receptor family.

The protein resides in the nucleus. In terms of biological role, orphan nuclear receptor. This chain is Nuclear hormone receptor family member nhr-103 (nhr-103), found in Caenorhabditis elegans.